We begin with the raw amino-acid sequence, 387 residues long: Methylthioribose-1-phosphate isomerase (387 aa).

Residue Asp257 is the Proton donor of the active site.

Belongs to the eIF-2B alpha/beta/delta subunits family. MtnA subfamily.

It is found in the cytoplasm. Its subcellular location is the nucleus. The catalysed reaction is 5-(methylsulfanyl)-alpha-D-ribose 1-phosphate = 5-(methylsulfanyl)-D-ribulose 1-phosphate. It participates in amino-acid biosynthesis; L-methionine biosynthesis via salvage pathway; L-methionine from S-methyl-5-thio-alpha-D-ribose 1-phosphate: step 1/6. Functionally, catalyzes the interconversion of methylthioribose-1-phosphate (MTR-1-P) into methylthioribulose-1-phosphate (MTRu-1-P). The chain is Methylthioribose-1-phosphate isomerase (mri1) from Aspergillus fumigatus (strain CBS 144.89 / FGSC A1163 / CEA10) (Neosartorya fumigata).